The sequence spans 331 residues: Phosphate acyltransferase (331 aa).

Belongs to the PlsX family. Homodimer. Probably interacts with PlsY.

It localises to the cytoplasm. The enzyme catalyses a fatty acyl-[ACP] + phosphate = an acyl phosphate + holo-[ACP]. The protein operates within lipid metabolism; phospholipid metabolism. Catalyzes the reversible formation of acyl-phosphate (acyl-PO(4)) from acyl-[acyl-carrier-protein] (acyl-ACP). This enzyme utilizes acyl-ACP as fatty acyl donor, but not acyl-CoA. This chain is Phosphate acyltransferase, found in Wolinella succinogenes (strain ATCC 29543 / DSM 1740 / CCUG 13145 / JCM 31913 / LMG 7466 / NCTC 11488 / FDC 602W) (Vibrio succinogenes).